A 214-amino-acid chain; its full sequence is Cytochrome b (214 aa).

4 helical membrane-spanning segments follow: residues 31 to 51 (FGSMLLSCLMIQIATGFFLAI), 75 to 96 (WIMQNTHAIGASLFFICIYIHI), 111 to 131 (WLSGTTLLIILMATAFFGYVL), and 176 to 196 (FFALHFILPFAIISLSSLHIL). Residues H81 and H95 each coordinate heme b. Heme b contacts are provided by H180 and H194. Position 199 (H199) interacts with a ubiquinone.

This sequence belongs to the cytochrome b family. As to quaternary structure, the cytochrome bc1 complex contains 3 respiratory subunits (MT-CYB, CYC1 and UQCRFS1), 2 core proteins (UQCRC1 and UQCRC2) and probably 6 low-molecular weight proteins. Heme b serves as cofactor.

It is found in the mitochondrion inner membrane. Functionally, component of the ubiquinol-cytochrome c reductase complex (complex III or cytochrome b-c1 complex) that is part of the mitochondrial respiratory chain. The b-c1 complex mediates electron transfer from ubiquinol to cytochrome c. Contributes to the generation of a proton gradient across the mitochondrial membrane that is then used for ATP synthesis. This Crotalus atrox (Western diamondback rattlesnake) protein is Cytochrome b (MT-CYB).